Reading from the N-terminus, the 441-residue chain is GTPase Der (441 aa).

EngA-type G domains follow at residues 2–164 (HKVA…PADD) and 173–343 (IRIS…DKWQ). GTP-binding positions include 8 to 15 (GRPNVGKS), 55 to 59 (DTGGL), 116 to 119 (NKID), 179 to 186 (GRPNVGKS), 226 to 230 (DTAGI), and 288 to 291 (NKWD).

The protein belongs to the TRAFAC class TrmE-Era-EngA-EngB-Septin-like GTPase superfamily. EngA (Der) GTPase family. As to quaternary structure, associates with the 50S ribosomal subunit.

In terms of biological role, GTPase that plays an essential role in the late steps of ribosome biogenesis. The chain is GTPase Der from Deinococcus deserti (strain DSM 17065 / CIP 109153 / LMG 22923 / VCD115).